The sequence spans 270 residues: tRNA pseudouridine synthase A (270 aa).

Catalysis depends on Asp-52, which acts as the Nucleophile. Tyr-110 contacts substrate.

Belongs to the tRNA pseudouridine synthase TruA family. Homodimer.

It carries out the reaction uridine(38/39/40) in tRNA = pseudouridine(38/39/40) in tRNA. Functionally, formation of pseudouridine at positions 38, 39 and 40 in the anticodon stem and loop of transfer RNAs. The polypeptide is tRNA pseudouridine synthase A (Roseiflexus castenholzii (strain DSM 13941 / HLO8)).